A 273-amino-acid chain; its full sequence is Large ribosomal subunit protein uL2 (273 aa).

The tract at residues 221 to 273 (RGTAMNPVDHPHGGGEGRNFGKHPVSPWGVQTKGKKTRHNKRTDKYIVRRRGK) is disordered. Basic residues predominate over residues 253–273 (KGKKTRHNKRTDKYIVRRRGK).

It belongs to the universal ribosomal protein uL2 family. Part of the 50S ribosomal subunit. Forms a bridge to the 30S subunit in the 70S ribosome.

In terms of biological role, one of the primary rRNA binding proteins. Required for association of the 30S and 50S subunits to form the 70S ribosome, for tRNA binding and peptide bond formation. It has been suggested to have peptidyltransferase activity; this is somewhat controversial. Makes several contacts with the 16S rRNA in the 70S ribosome. The protein is Large ribosomal subunit protein uL2 of Mannheimia succiniciproducens (strain KCTC 0769BP / MBEL55E).